A 721-amino-acid chain; its full sequence is Translation initiation factor eIF2B subunit epsilon (721 aa).

Positions 1 to 13 are enriched in low complexity; it reads MAAPVVAPPGVVV. The segment at 1 to 40 is disordered; sequence MAAPVVAPPGVVVSRANKRSGAGPGGSGGGGARGAEEEPP. Ala2 carries the post-translational modification N-acetylalanine. The residue at position 19 (Arg19) is an Omega-N-methylarginine. A compositionally biased stretch (gly residues) spans 22 to 33; it reads AGPGGSGGGGAR. Ser27 carries the phosphoserine modification. Glycyl lysine isopeptide (Lys-Gly) (interchain with G-Cter in ubiquitin) cross-links involve residues Lys61 and Lys103. At Ser130 the chain carries Phosphoserine. Glycyl lysine isopeptide (Lys-Gly) (interchain with G-Cter in ubiquitin) cross-links involve residues Lys141 and Lys217. A Phosphothreonine modification is found at Thr322. Disordered regions lie at residues 444-483 and 523-547; these read PEGSVISLHPPDAEEDEDDGEFSDDSGADQEKDKVKMKGY and EESESESEQSMDSEEPDSRGGSPQM. Phosphoserine occurs at positions 450, 466, 469, 532, and 540. 2 stretches are compositionally biased toward acidic residues: residues 456 to 471 and 523 to 537; these read AEEDEDDGEFSDDSGA and EESESESEQSMDSEE. In terms of domain architecture, W2 spans 543–720; that stretch reads GSPQMDDIKV…KEAEEESSED (178 aa). A Phosphoserine; by DYRK2 modification is found at Ser544. Phosphoserine is present on Ser717.

It belongs to the eIF-2B gamma/epsilon subunits family. In terms of assembly, component of the translation initiation factor 2B (eIF2B) complex which is a heterodecamer of two sets of five different subunits: alpha, beta, gamma, delta and epsilon. Subunits alpha, beta and delta comprise a regulatory subcomplex and subunits epsilon and gamma comprise a catalytic subcomplex. Within the complex, the hexameric regulatory complex resides at the center, with the two heterodimeric catalytic subcomplexes bound on opposite sides. Post-translationally, phosphorylated at Ser-544 by DYRK2; this is required for subsequent phosphorylation by GSK3B. Phosphorylated on serine and threonine residues by GSK3B; phosphorylation inhibits its function. In terms of processing, polyubiquitinated, probably by NEDD4.

Its subcellular location is the cytoplasm. It localises to the cytosol. With respect to regulation, activated by the chemical integrated stress response (ISR) inhibitor ISRIB which stimulates guanine nucleotide exchange factor activity for both phosphorylated and unphosphorylated eIF2. Acts as a component of the translation initiation factor 2B (eIF2B) complex, which catalyzes the exchange of GDP for GTP on eukaryotic initiation factor 2 (eIF2) gamma subunit. Its guanine nucleotide exchange factor activity is repressed when bound to eIF2 complex phosphorylated on the alpha subunit, thereby limiting the amount of methionyl-initiator methionine tRNA available to the ribosome and consequently global translation is repressed. This chain is Translation initiation factor eIF2B subunit epsilon (EIF2B5), found in Homo sapiens (Human).